Reading from the N-terminus, the 289-residue chain is G1/S-specific cyclin-D2 (289 aa).

A Cyclin N-terminal domain is found at 26-151 (VLQNLLTIEE…VVLGKLKWNL (126 aa)). The tract at residues 264–289 (DQGDGSKSEDELDQASTPTDVRDIDL) is disordered. S271 carries the phosphoserine modification. Position 280 is a phosphothreonine (T280).

The protein belongs to the cyclin family. Cyclin D subfamily. As to quaternary structure, interacts with either CDK4 or CDK6 protein kinase to form a serine/threonine kinase holoenzyme complex. The cyclin subunit imparts substrate specificity to the complex. Post-translationally, phosphorylation at Thr-280 by MAP kinases is required for ubiquitination and degradation by the DCX(AMBRA1) complex. In terms of processing, ubiquitinated by the DCX(AMBRA1) complex during the transition from G1 to S cell phase, leading to its degradation: ubiquitination is dependent on Thr-280 phosphorylation. The DCX(AMBRA1) complex represents the major regulator of CCND2 stability during the G1/S transition. Polyubiquitinated by the SCF(FBXL2) complex, leading to proteasomal degradation.

The protein resides in the nucleus. It is found in the cytoplasm. It localises to the nucleus membrane. Regulatory component of the cyclin D2-CDK4 (DC) complex that phosphorylates and inhibits members of the retinoblastoma (RB) protein family including RB1 and regulates the cell-cycle during G(1)/S transition. Phosphorylation of RB1 allows dissociation of the transcription factor E2F from the RB/E2F complex and the subsequent transcription of E2F target genes which are responsible for the progression through the G(1) phase. Hypophosphorylates RB1 in early G(1) phase. Cyclin D-CDK4 complexes are major integrators of various mitogenenic and antimitogenic signals. The protein is G1/S-specific cyclin-D2 (CCND2) of Bos taurus (Bovine).